The sequence spans 243 residues: CR(VI) reductase (243 aa).

Belongs to the flavin oxidoreductase frp family. The cofactor is FMN.

The protein is CR(VI) reductase (chrR) of Pseudomonas sp. (strain G-1).